Reading from the N-terminus, the 773-residue chain is Mitogen-activated protein kinase kinase kinase 9 (773 aa).

Residues 1–14 are compositionally biased toward basic and acidic residues; it reads MKKSSDKSPVRQHD. The segment at 1–35 is disordered; it reads MKKSSDKSPVRQHDTATQINSDAVSSSTSFTDSDS. Residues 21–35 are compositionally biased toward low complexity; sequence SDAVSSSTSFTDSDS. Residues Ser-79 and Ser-150 each carry the phosphoserine modification. Positions 100-493 are regulatory region; that stretch reads FDKILALMKK…VSNTSPICVS (394 aa). Ser-365 carries the phosphoserine; by MAPK4 modification. Residues 426-455 form a disordered region; that stretch reads EIVRRPSSSSSSENGCDEEEAEDDKVEKEE. Acidic residues predominate over residues 440–449; it reads GCDEEEAEDD. Residues 501 to 755 enclose the Protein kinase domain; the sequence is WQKGQLLRQG…ATELLNHPFV (255 aa). ATP-binding positions include 507-515 and Lys-529; that span reads LRQGSFGSV. The active-site Proton acceptor is Asp-624. Ser-768 carries the post-translational modification Phosphoserine.

This sequence belongs to the protein kinase superfamily. STE Ser/Thr protein kinase family. MAP kinase kinase kinase subfamily. As to quaternary structure, interacts with MPK4. In terms of processing, phosphorylated by MPK4 upon treatment with flg22. In terms of tissue distribution, expressed at least in rosette leaves (at protein level).

The enzyme catalyses L-seryl-[protein] + ATP = O-phospho-L-seryl-[protein] + ADP + H(+). It carries out the reaction L-threonyl-[protein] + ATP = O-phospho-L-threonyl-[protein] + ADP + H(+). Functionally, triggers SUMM2-mediated immune responses, including cell death and defense responses. Probably inhibited by the MEKK1-MKK1/ MKK2-MPK4 kinase cascade to adjust plant defense. Seems to contribute in transducing external glutamate (L-Glu) signal that elicits large-scale changes in root architecture. This is Mitogen-activated protein kinase kinase kinase 9 from Arabidopsis thaliana (Mouse-ear cress).